The following is a 222-amino-acid chain: Pro-opiomelanocortin-1 (222 aa).

Residues 1–28 (MVRGERMLCPAWLLALAVLCAAGSEVRA) form the signal peptide. A propeptide spanning residues 29–105 (QCMEDARCRD…DPESSPQHEH (77 aa)) is cleaved from the precursor.

This sequence belongs to the POMC family. In terms of processing, specific enzymatic cleavages at paired basic residues yield the different active peptides.

It localises to the secreted. In terms of biological role, stimulates the adrenal glands to release cortisol. Anorexigenic peptide. Increases the pigmentation of skin by increasing melanin production in melanocytes. Functionally, increases the pigmentation of skin by increasing melanin production in melanocytes. Its function is as follows. Endogenous orexigenic opiate. In terms of biological role, endogenous opiate. This chain is Pro-opiomelanocortin-1 (pomca), found in Cyprinus carpio (Common carp).